The primary structure comprises 529 residues: Listeriolysin O (529 aa).

The signal sequence occupies residues 1 to 24 (MKKIMLVFITLILISLPIAQQTEA). Residues 35–54 (SISSMAPPASPPASPKTPIE) are disordered. The next 4 membrane-spanning stretches (beta stranded) occupy residues 214–227 (ESQLIAKFGTAFKA), 234–243 (VNFGAISEGK), 312–321 (STKVKAAFDA), and 329–341 (SGDVELTNIIKNS). The Conserved undecapeptide signature appears at 483-493 (ECTGLAWEWWR). The short motif at 515 to 516 (TL) is the Cholesterol binding element.

This sequence belongs to the cholesterol-dependent cytolysin family. As to quaternary structure, homooligomeric pore complex of 35 to 50 subunits; when inserted in the host membrane.

It is found in the secreted. The protein resides in the host membrane. It localises to the host cell membrane. Activity of listeriolysin O is regulated on multiple levels. It should be high in the phagosome, thereby allowing escape of the bacteria from the phagosomal compartment. Then, once inside the host cytosol, the activity must be controlled to prevent lysis of the host plasma membrane and loss of the intracellular environment. Its function is as follows. A cholesterol-dependent toxin that causes cytolysis by forming pores in cholesterol containing host membranes. After binding to target membranes, the protein undergoes a major conformation change, leading to its insertion in the host membrane and formation of an oligomeric pore complex. Cholesterol is required for binding to host membranes, membrane insertion and pore formation; cholesterol binding is mediated by a Thr-Leu pair in the C-terminus. Acts as a major virulence factor required for the escape of bacteria from phagosomal vacuoles and entry into the host cytosol. Can be reversibly inactivated by oxidation. The chain is Listeriolysin O (hly) from Listeria monocytogenes serotype 4a (strain HCC23).